Reading from the N-terminus, the 67-residue chain is Protein C' (67 aa).

The protein belongs to the rhabdoviruses C protein family.

Its function is as follows. Seems to stimulates transcription by the viral polymerase. May play a role in viral pathogenesis or transmission by insects vectors. In Vesicular stomatitis Indiana virus (strain 85CLB South America) (VSIV), this protein is Protein C' (P).